The following is a 147-amino-acid chain: Large ribosomal subunit protein uL11 (147 aa).

The protein belongs to the universal ribosomal protein uL11 family. Part of the ribosomal stalk of the 50S ribosomal subunit. Interacts with L10 and the large rRNA to form the base of the stalk. L10 forms an elongated spine to which L12 dimers bind in a sequential fashion forming a multimeric L10(L12)X complex. In terms of processing, one or more lysine residues are methylated.

Its function is as follows. Forms part of the ribosomal stalk which helps the ribosome interact with GTP-bound translation factors. The sequence is that of Large ribosomal subunit protein uL11 from Corynebacterium aurimucosum (strain ATCC 700975 / DSM 44827 / CIP 107346 / CN-1) (Corynebacterium nigricans).